The primary structure comprises 399 residues: Oligoribonuclease NrnB (399 aa).

It depends on Mn(2+) as a cofactor. Co(2+) serves as cofactor. Requires Mg(2+) as cofactor.

The protein localises to the cytoplasm. Its function is as follows. Degrades RNA oligonucleotides with a length of 5 nucleotides in a 3'- to 5'-direction. Less active on shorter RNA oligonucleotides and on those with a length of 24 nucleotides. Prefers RNA oligonucleotides containing adenines rather than cytosines. This is Oligoribonuclease NrnB (nrnB) from Bacillus subtilis (strain 168).